Here is a 443-residue protein sequence, read N- to C-terminus: Amino-acid acetyltransferase (443 aa).

Residues 296 to 435 (EQIRRATIND…KEMYNYQRRS (140 aa)) form the N-acetyltransferase domain.

Belongs to the acetyltransferase family. ArgA subfamily. As to quaternary structure, homohexamer.

It is found in the cytoplasm. The catalysed reaction is L-glutamate + acetyl-CoA = N-acetyl-L-glutamate + CoA + H(+). It functions in the pathway amino-acid biosynthesis; L-arginine biosynthesis; N(2)-acetyl-L-ornithine from L-glutamate: step 1/4. This Enterobacter sp. (strain 638) protein is Amino-acid acetyltransferase.